Consider the following 289-residue polypeptide: Ribonuclease Z (289 aa).

Zn(2+)-binding residues include His63, His65, Asp67, His68, His143, Asp197, and His255. Residue Asp67 is the Proton acceptor of the active site.

This sequence belongs to the RNase Z family. As to quaternary structure, homodimer. The cofactor is Zn(2+).

The enzyme catalyses Endonucleolytic cleavage of RNA, removing extra 3' nucleotides from tRNA precursor, generating 3' termini of tRNAs. A 3'-hydroxy group is left at the tRNA terminus and a 5'-phosphoryl group is left at the trailer molecule.. In terms of biological role, zinc phosphodiesterase, which displays some tRNA 3'-processing endonuclease activity. Probably involved in tRNA maturation, by removing a 3'-trailer from precursor tRNA. The sequence is that of Ribonuclease Z from Azobacteroides pseudotrichonymphae genomovar. CFP2.